Reading from the N-terminus, the 56-residue chain is Large ribosomal subunit protein bL32 (56 aa).

The segment at 1-27 (MAVQQNKKSRSRRDMRRSHDALTTAAV) is disordered. Residues 7-16 (KKSRSRRDMR) are compositionally biased toward basic residues.

The protein belongs to the bacterial ribosomal protein bL32 family.

This Actinobacillus pleuropneumoniae serotype 7 (strain AP76) protein is Large ribosomal subunit protein bL32.